The following is a 1888-amino-acid chain: Protein mms22 (1888 aa).

Disordered stretches follow at residues 12–34 (DSQD…RGNE), 151–258 (FSSD…ISSN), and 316–354 (RRKL…SRFD). 3 stretches are compositionally biased toward polar residues: residues 13–32 (SQDS…SQRG), 212–227 (SNLN…SSTI), and 338–348 (SDNSISTPTPT).

This sequence belongs to the MMS22 family.

The protein resides in the nucleus. Its function is as follows. Involved in protection against replication-dependent DNA damage. May act by restoring active replication forks, repairing unusual DNA structures, and/or preventing aberrant DNA rearrangement at arrested replication forks. The polypeptide is Protein mms22 (mus7) (Schizosaccharomyces pombe (strain 972 / ATCC 24843) (Fission yeast)).